Consider the following 118-residue polypeptide: Basic phospholipase A2 PA-11 (118 aa).

7 disulfides stabilise this stretch: Cys11/Cys71, Cys27/Cys117, Cys29/Cys45, Cys44/Cys98, Cys51/Cys91, Cys60/Cys84, and Cys78/Cys89. 3 residues coordinate Ca(2+): Tyr28, Gly30, and Gly32. Residue His48 is part of the active site. Asp49 serves as a coordination point for Ca(2+). Residue Asp92 is part of the active site.

This sequence belongs to the phospholipase A2 family. Group I subfamily. D49 sub-subfamily. Ca(2+) serves as cofactor. Expressed by the venom gland.

Its subcellular location is the secreted. It carries out the reaction a 1,2-diacyl-sn-glycero-3-phosphocholine + H2O = a 1-acyl-sn-glycero-3-phosphocholine + a fatty acid + H(+). Its function is as follows. PLA2 catalyzes the calcium-dependent hydrolysis of the 2-acyl groups in 3-sn-phosphoglycerides. In Pseudechis australis (Mulga snake), this protein is Basic phospholipase A2 PA-11.